Reading from the N-terminus, the 605-residue chain is Glucose oxidase (605 aa).

Positions 1–16 (MQTLLVSSLVVSLAAA) are cleaved as a signal peptide. FAD is bound by residues Leu51 and Thr52. Residue Asn65 is glycosylated (N-linked (GlcNAc...) asparagine). Glu72 contributes to the FAD binding site. N-linked (GlcNAc...) asparagine glycosylation is present at Asn111. FAD is bound by residues Ser125, Asn129, Gly130, and Thr132. N-linked (GlcNAc...) asparagine glycans are attached at residues Asn183 and Asn190. A disulfide bridge links Cys186 with Cys228. Val272 is a binding site for FAD. N-linked (GlcNAc...) asparagine glycosylation is found at Asn280, Asn377, Asn410, and Asn495. The Proton acceptor role is filled by His538. The O2 site is built by Arg559 and Val560. FAD-binding residues include Gly571 and Met583.

Belongs to the GMC oxidoreductase family. In terms of assembly, homodimer. The cofactor is FAD. Post-translationally, the N-linked sugar chains of the glucose oxidase contributed to the high solubility of the enzyme in water.

The protein localises to the secreted. The protein resides in the cell wall. It is found in the cytoplasm. Its subcellular location is the extracellular space. It localises to the extracellular matrix. The catalysed reaction is beta-D-glucose + O2 = D-glucono-1,5-lactone + H2O2. Functionally, glucose oxidase catalyzes the oxidation of beta-D-glucose to D-glucono-delta-lactone and hydrogen peroxide in the presence of molecular oxygen. D-glucono-delta-lactone is sequentially hydrolyzed by lactonase to D-gluconic acid, and the resulting hydrogen peroxide is hydrolyzed by catalase to oxygen and water. The activity shows high specificity to beta-D-glucose, with very low to no activity towards L-glucose, 2-deoxy-D-glucose, 3-deoxy-D-glucose, 4-deoxy-D-glucose, 5-deoxy-D-glucose, 6-deoxy-D-glucose, 3-O-methyl-D-glucose, 4-O-methyl-D-glucose, 6-O-methyl-D-glucose, 4,6-O-benzylidene-D-glucose, 5-thio-5-deoxy-D-glucose, D-mannose, D-allose, D-galactose, D-fructose, D-arabinose, D-xylose, trehalose, melibiose, L-mannomethylose, lactose, sucrose or 1,5-anhydro-D-glucitol. This chain is Glucose oxidase, found in Aspergillus niger.